We begin with the raw amino-acid sequence, 233 residues long: Tetrahydromethanopterin S-methyltransferase subunit D (233 aa).

Helical transmembrane passes span 4–24 (LLLI…VHFV), 39–59 (VGTG…ITAA), 67–87 (LMIM…TMLV), 133–153 (FVSG…IYWA), 166–186 (MGAA…NAVI), and 209–229 (GIVA…LLVY).

This sequence belongs to the MtrD family. As to quaternary structure, the complex is composed of 8 subunits; MtrA, MtrB, MtrC, MtrD, MtrE, MtrF, MtrG and MtrH.

It is found in the cell membrane. It carries out the reaction 5-methyl-5,6,7,8-tetrahydromethanopterin + coenzyme M + 2 Na(+)(in) = 5,6,7,8-tetrahydromethanopterin + methyl-coenzyme M + 2 Na(+)(out). It participates in one-carbon metabolism; methanogenesis from CO(2); methyl-coenzyme M from 5,10-methylene-5,6,7,8-tetrahydromethanopterin: step 2/2. Part of a complex that catalyzes the formation of methyl-coenzyme M and tetrahydromethanopterin from coenzyme M and methyl-tetrahydromethanopterin. This is an energy-conserving, sodium-ion translocating step. The chain is Tetrahydromethanopterin S-methyltransferase subunit D from Methanothermobacter marburgensis (strain ATCC BAA-927 / DSM 2133 / JCM 14651 / NBRC 100331 / OCM 82 / Marburg) (Methanobacterium thermoautotrophicum).